The sequence spans 161 residues: Ribosome maturation factor RimP (161 aa).

Belongs to the RimP family.

It is found in the cytoplasm. Required for maturation of 30S ribosomal subunits. The chain is Ribosome maturation factor RimP from Pelobacter propionicus (strain DSM 2379 / NBRC 103807 / OttBd1).